The sequence spans 454 residues: NADP-specific glutamate dehydrogenase 1 (454 aa).

Serine 2 is modified (N-acetylserine). The active site involves lysine 110. Residue 174-203 (GVLTGKGLNWGGSLIRPEATGYGLVYYTQA) coordinates NAD(+). Glycyl lysine isopeptide (Lys-Gly) (interchain with G-Cter in ubiquitin) cross-links involve residues lysine 325, lysine 371, and lysine 433.

This sequence belongs to the Glu/Leu/Phe/Val dehydrogenases family. As to quaternary structure, homohexamer.

The catalysed reaction is L-glutamate + NADP(+) + H2O = 2-oxoglutarate + NH4(+) + NADPH + H(+). In terms of biological role, catalyzes the incorporation of an ammonium ion into alpha-ketoglutarate to form L-glutamate, the major route of assimilation of ammonia into an organic form in yeast. The polypeptide is NADP-specific glutamate dehydrogenase 1 (Saccharomyces cerevisiae (strain ATCC 204508 / S288c) (Baker's yeast)).